The primary structure comprises 274 residues: Tryptophan synthase alpha chain (274 aa).

Catalysis depends on proton acceptor residues glutamate 49 and aspartate 60.

The protein belongs to the TrpA family. Tetramer of two alpha and two beta chains.

It carries out the reaction (1S,2R)-1-C-(indol-3-yl)glycerol 3-phosphate + L-serine = D-glyceraldehyde 3-phosphate + L-tryptophan + H2O. It functions in the pathway amino-acid biosynthesis; L-tryptophan biosynthesis; L-tryptophan from chorismate: step 5/5. In terms of biological role, the alpha subunit is responsible for the aldol cleavage of indoleglycerol phosphate to indole and glyceraldehyde 3-phosphate. This chain is Tryptophan synthase alpha chain, found in Gluconacetobacter diazotrophicus (strain ATCC 49037 / DSM 5601 / CCUG 37298 / CIP 103539 / LMG 7603 / PAl5).